Consider the following 416-residue polypeptide: MDYSIKEQDFEVFELIEKELERQNEHLEMIASENFTFPSVMEAMGSILTNKYAEGYPFKRYYGGCEFVDKIEEIAIERAKKLFGANFVNVQPHSGSQANAAVYAAILKPYDKILGMDLSHGGHLTHGAKVSTSGQLYQSFFYGVELNGRIDYDKLALQAQVVKPNVLVCGFSAYTRELDFKRLREIADSVGAYLMGDIAHVAGLVVAGEYPNPFPHCHIVTTTTHKTLRGPRGGAILTNDEELYAKINKAVFPGIQGGPLMHIIAGKAVGFKENLKPEWKIYAKQVKSNIQALAEVLIKRNYELVSGGSDNHLILMSFLNKDFSGKDADLALGNAGITVNKNTIPGEIRSPFITSGIRIGSPALTARGMKEKEFEWIGEKIADILDDINNTNLQEHIKAQVKNFSRDFRIYDRPIF.

Residues Leu-118 and 122–124 (GHL) contribute to the (6S)-5,6,7,8-tetrahydrofolate site. Residue Lys-226 is modified to N6-(pyridoxal phosphate)lysine. (6S)-5,6,7,8-tetrahydrofolate is bound by residues Glu-242 and 350-352 (SPF).

This sequence belongs to the SHMT family. Homodimer. Pyridoxal 5'-phosphate is required as a cofactor.

The protein localises to the cytoplasm. The enzyme catalyses (6R)-5,10-methylene-5,6,7,8-tetrahydrofolate + glycine + H2O = (6S)-5,6,7,8-tetrahydrofolate + L-serine. Its pathway is one-carbon metabolism; tetrahydrofolate interconversion. The protein operates within amino-acid biosynthesis; glycine biosynthesis; glycine from L-serine: step 1/1. Catalyzes the reversible interconversion of serine and glycine with tetrahydrofolate (THF) serving as the one-carbon carrier. This reaction serves as the major source of one-carbon groups required for the biosynthesis of purines, thymidylate, methionine, and other important biomolecules. Also exhibits THF-independent aldolase activity toward beta-hydroxyamino acids, producing glycine and aldehydes, via a retro-aldol mechanism. The chain is Serine hydroxymethyltransferase from Helicobacter hepaticus (strain ATCC 51449 / 3B1).